A 217-amino-acid polypeptide reads, in one-letter code: tRNA (guanine-N(7)-)-methyltransferase (217 aa).

The S-adenosyl-L-methionine site is built by glutamate 48, glutamate 73, asparagine 100, and aspartate 123. The active site involves aspartate 123. Substrate-binding residues include lysine 127 and aspartate 159.

The protein belongs to the class I-like SAM-binding methyltransferase superfamily. TrmB family.

The catalysed reaction is guanosine(46) in tRNA + S-adenosyl-L-methionine = N(7)-methylguanosine(46) in tRNA + S-adenosyl-L-homocysteine. Its pathway is tRNA modification; N(7)-methylguanine-tRNA biosynthesis. Its function is as follows. Catalyzes the formation of N(7)-methylguanine at position 46 (m7G46) in tRNA. The protein is tRNA (guanine-N(7)-)-methyltransferase of Leptospira interrogans serogroup Icterohaemorrhagiae serovar copenhageni (strain Fiocruz L1-130).